The chain runs to 1794 residues: Non-reducing polyketide synthase nscA (1794 aa).

Positions 19–256 (DLKDLFRRLH…PLPVYDGLCH (238 aa)) are N-terminal acylcarrier protein transacylase domain (SAT). Residues 389–822 (ASKLAIVGMA…GGNTTVLLED (434 aa)) form the Ketosynthase family 3 (KS3) domain. The segment at 427–448 (PDRFDLNTHYDPTGKTENATQT) is disordered. A compositionally biased stretch (basic and acidic residues) spans 428–440 (DRFDLNTHYDPTG). Active-site for beta-ketoacyl synthase activity residues include C562, H697, and H740. Residues 928–1249 (FTGQGAYYSG…LVTLHLAGLT (322 aa)) are malonyl-CoA:ACP transacylase (MAT) domain. Positions 1314–1633 (TSLVHQITAE…RLLMDRFFSP (320 aa)) are product template (PT) domain. The interval 1318-1454 (HQITAETVEA…GVVRFEDPAA (137 aa)) is N-terminal hotdog fold. The 311-residue stretch at 1318–1628 (HQITAETVEA…FRRVPRLLMD (311 aa)) folds into the PKS/mFAS DH domain. The Proton acceptor; for dehydratase activity role is filled by H1350. The segment at 1482–1628 (ASKLSKPLAY…FRRVPRLLMD (147 aa)) is C-terminal hotdog fold. The active-site Proton donor; for dehydratase activity is D1539. 2 disordered regions span residues 1637–1665 (SHAE…EAPA) and 1682–1718 (ASKS…GDPV). Composition is skewed to polar residues over residues 1644–1655 (QETAPSATSVKK) and 1685–1701 (SEVS…QESP). The Carrier domain occupies 1717-1794 (PVDAGVVGQC…EMTAWLEEYC (78 aa)). The residue at position 1754 (S1754) is an O-(pantetheine 4'-phosphoryl)serine.

Requires pantetheine 4'-phosphate as cofactor.

The protein operates within secondary metabolite biosynthesis. In terms of biological role, non-reducing polyketide synthase; part of the gene cluster that mediates the biosynthesis of neosartoricin, a prenylated anthracenone that exhibits T-cell antiproliferative activity, suggestive of a physiological role as an immunosuppressive agent. The non-reducing polyketide synthase nscA probably synthesizes and cyclizes the decaketide backbone. The hydrolase nscB then mediates the product release through hydrolysis followed by spontaneous decarboxylation. The prenyltransferase nscD catalyzes the addition of the dimethylallyl group to the aromatic C5. The FAD-dependent monooxygenase nscC is then responsible for the stereospecific hydroxylation at C2. There is no gene encoding O-acetyltransferase in the nsc gene cluster; thus, the last step of 2-O-acetylation leading to neosartoricin may be catalyzed by an unidentified O-acetyltransferase. The polypeptide is Non-reducing polyketide synthase nscA (Neosartorya fischeri (strain ATCC 1020 / DSM 3700 / CBS 544.65 / FGSC A1164 / JCM 1740 / NRRL 181 / WB 181) (Aspergillus fischerianus)).